The following is a 677-amino-acid chain: mRNA 3'-end-processing protein RNA14 (677 aa).

HAT repeat units follow at residues 56–88 (ESYA…GELA), 90–124 (DEFE…YIRR), 138–170 (VIVK…FLEQ), 181–214 (QRID…WEQE), 257–289 (RTAN…WERE), and 298–330 (MLSQ…YISE).

As to quaternary structure, component of the CFIA complex, which is composed of RNA14, RNA15, PCF11 and CLP1. Interacts with FIP1, PFS2, YSH1 and probably also with RNA15. Probably interacts with the phosphorylated CTD domain of RPB1/RNA polymerase II.

It localises to the nucleus. Its subcellular location is the cytoplasm. In terms of biological role, component of the cleavage factor IA (CFIA) complex, which is involved in the endonucleolytic cleavage during polyadenylation-dependent pre-mRNA 3'-end formation and cooperates with the cleavage factor NAB4/CFIB and the cleavage and polyadenylation factor (CPF) complex. This chain is mRNA 3'-end-processing protein RNA14 (RNA14), found in Saccharomyces cerevisiae (strain ATCC 204508 / S288c) (Baker's yeast).